A 400-amino-acid polypeptide reads, in one-letter code: 3-phenylpropionate/cinnamic acid dioxygenase ferredoxin--NAD(+) reductase component (400 aa).

5-36 serves as a coordination point for FAD; sequence TIIIVGGGQAAAMAAASLRQQGFTGELHLFSD. Residue 146–174 coordinates NAD(+); sequence SVVIVGAGTIGLELAASATQRGCKVTVIE.

Belongs to the bacterial ring-hydroxylating dioxygenase ferredoxin reductase family. As to quaternary structure, this dioxygenase system consists of four proteins: the two subunits of the hydroxylase component (HcaE and HcaF), a ferredoxin (HcaC) and a ferredoxin reductase (HcaD). FAD serves as cofactor.

The enzyme catalyses 2 reduced [2Fe-2S]-[ferredoxin] + NAD(+) + H(+) = 2 oxidized [2Fe-2S]-[ferredoxin] + NADH. It participates in aromatic compound metabolism; 3-phenylpropanoate degradation. In terms of biological role, part of the multicomponent 3-phenylpropionate dioxygenase, that converts 3-phenylpropionic acid (PP) and cinnamic acid (CI) into 3-phenylpropionate-dihydrodiol (PP-dihydrodiol) and cinnamic acid-dihydrodiol (CI-dihydrodiol), respectively. In Escherichia coli (strain SMS-3-5 / SECEC), this protein is 3-phenylpropionate/cinnamic acid dioxygenase ferredoxin--NAD(+) reductase component.